Reading from the N-terminus, the 317-residue chain is Inositol oxygenase 4 (317 aa).

Substrate is bound by residues Arg58 and 115 to 117 (DES). Positions 128, 153, and 154 each coordinate Fe cation. Residues Lys157 and 174 to 175 (GD) each bind substrate. Residues His226, His252, and Asp285 each contribute to the Fe cation site. 252–253 (HS) serves as a coordination point for substrate.

It belongs to the myo-inositol oxygenase family. Requires Fe cation as cofactor. Expressed in flowers, leaves, siliques, and to a lesser extent in roots.

The protein localises to the cytoplasm. It carries out the reaction myo-inositol + O2 = D-glucuronate + H2O + H(+). It participates in polyol metabolism; myo-inositol degradation into D-glucuronate; D-glucuronate from myo-inositol: step 1/1. Its function is as follows. Catalyzes the oxygenative cleavage of myo-inositol to D-glucuronate. Involved in the biosynthesis of UDP-glucuronic acid (UDP-GlcA), providing nucleotide sugars for cell-wall polymers. May be also involved in plant ascorbate biosynthesis. This is Inositol oxygenase 4 (MIOX4) from Arabidopsis thaliana (Mouse-ear cress).